A 552-amino-acid polypeptide reads, in one-letter code: Urocanate hydratase (552 aa).

Residues 49 to 50 (GG), glutamine 127, 173 to 175 (GMG), aspartate 193, 239 to 240 (NA), 260 to 264 (QTSAH), 270 to 271 (YI), and tyrosine 319 contribute to the NAD(+) site. Residue cysteine 407 is part of the active site. An NAD(+)-binding site is contributed by glycine 489.

This sequence belongs to the urocanase family. It depends on NAD(+) as a cofactor.

Its subcellular location is the cytoplasm. The catalysed reaction is 4-imidazolone-5-propanoate = trans-urocanate + H2O. It participates in amino-acid degradation; L-histidine degradation into L-glutamate; N-formimidoyl-L-glutamate from L-histidine: step 2/3. Its function is as follows. Catalyzes the conversion of urocanate to 4-imidazolone-5-propionate. The chain is Urocanate hydratase from Bacillus cereus (strain ATCC 14579 / DSM 31 / CCUG 7414 / JCM 2152 / NBRC 15305 / NCIMB 9373 / NCTC 2599 / NRRL B-3711).